Consider the following 306-residue polypeptide: Putative dihydroorotate dehydrogenase A (fumarate) (306 aa).

Residues Ser-24 and 48-49 (KS) each bind FMN. Substrate is bound by residues Lys-48, 72–76 (NAVGL), and Asn-129. Position 129 (Asn-129) interacts with FMN. Cys-132 acts as the Nucleophile in catalysis. FMN is bound by residues Lys-167 and Ile-192. Position 193–194 (193–194 (NS)) interacts with substrate. Residues Gly-218 and 244 to 245 (GG) contribute to the FMN site.

The protein belongs to the dihydroorotate dehydrogenase family. Type 1 subfamily. As to quaternary structure, homodimer. Requires FMN as cofactor.

Its subcellular location is the cytoplasm. It carries out the reaction (S)-dihydroorotate + fumarate = orotate + succinate. It functions in the pathway pyrimidine metabolism; UMP biosynthesis via de novo pathway. In terms of biological role, catalyzes the conversion of dihydroorotate to orotate with fumarate as the electron acceptor. This Aeropyrum pernix (strain ATCC 700893 / DSM 11879 / JCM 9820 / NBRC 100138 / K1) protein is Putative dihydroorotate dehydrogenase A (fumarate) (pyrD).